Reading from the N-terminus, the 444-residue chain is Homogentisate 1,2-dioxygenase (444 aa).

The active-site Proton acceptor is the His-298. Residues His-341 and Glu-347 each coordinate Fe cation. The homogentisate site is built by Tyr-356 and His-377. Residue His-377 coordinates Fe cation.

Belongs to the homogentisate dioxygenase family. Hexamer; dimer of trimers. The cofactor is Fe cation.

It carries out the reaction homogentisate + O2 = 4-maleylacetoacetate + H(+). It functions in the pathway amino-acid degradation; L-phenylalanine degradation; acetoacetate and fumarate from L-phenylalanine: step 4/6. In terms of biological role, involved in the catabolism of homogentisate (2,5-dihydroxyphenylacetate or 2,5-OH-PhAc), a central intermediate in the degradation of phenylalanine and tyrosine. Catalyzes the oxidative ring cleavage of the aromatic ring of homogentisate to yield maleylacetoacetate. The polypeptide is Homogentisate 1,2-dioxygenase (Burkholderia lata (strain ATCC 17760 / DSM 23089 / LMG 22485 / NCIMB 9086 / R18194 / 383)).